We begin with the raw amino-acid sequence, 220 residues long: Type-4 uracil-DNA glycosylase (220 aa).

Residues cysteine 14 and cysteine 17 each contribute to the [4Fe-4S] cluster site. Uracil contacts are provided by residues 41-43 (GEA), phenylalanine 55, and asparagine 82. Cysteine 86 and cysteine 102 together coordinate [4Fe-4S] cluster. Histidine 164 is a uracil binding site.

It belongs to the uracil-DNA glycosylase (UDG) superfamily. Type 4 (UDGa) family.

It carries out the reaction Hydrolyzes single-stranded DNA or mismatched double-stranded DNA and polynucleotides, releasing free uracil.. Its function is as follows. Removes uracil bases that are present in DNA as a result of either deamination of cytosine or misincorporation of dUMP instead of dTMP. The sequence is that of Type-4 uracil-DNA glycosylase from Sulfurisphaera tokodaii (strain DSM 16993 / JCM 10545 / NBRC 100140 / 7) (Sulfolobus tokodaii).